Here is a 396-residue protein sequence, read N- to C-terminus: Elongation factor Tu 2 (396 aa).

The region spanning 10–206 (KPHVNVGTIG…ALDTYIPTPE (197 aa)) is the tr-type G domain. Residues 19–26 (GHVDHGKT) form a G1 region. Residue 19-26 (GHVDHGKT) coordinates GTP. A Mg(2+)-binding site is contributed by threonine 26. Residues 60–64 (GITIN) are G2. The interval 81–84 (DCPG) is G3. GTP contacts are provided by residues 81 to 85 (DCPGH) and 136 to 139 (NKAD). Positions 136-139 (NKAD) are G4. The tract at residues 174-176 (SAK) is G5.

It belongs to the TRAFAC class translation factor GTPase superfamily. Classic translation factor GTPase family. EF-Tu/EF-1A subfamily. As to quaternary structure, monomer.

It is found in the cytoplasm. The catalysed reaction is GTP + H2O = GDP + phosphate + H(+). Its function is as follows. GTP hydrolase that promotes the GTP-dependent binding of aminoacyl-tRNA to the A-site of ribosomes during protein biosynthesis. This Methylobacillus flagellatus (strain ATCC 51484 / DSM 6875 / VKM B-1610 / KT) protein is Elongation factor Tu 2.